A 500-amino-acid chain; its full sequence is MKKARMIVDKEYKIGEVDKRIYGSFIEHMGRAVYEGIYEPDHPEADEDGFRKDVQSLIKELQVPIIRYPGGNFLSGYNWEDGVGPVENRPRRLDLAWQTTETNEVGTNEFLSWAKKVNTEVNMAVNLGTRGIDAARNLVEYCNHPKGSYWSDLRRSHGYEQPYGIKTWCLGNEMDGPWQIGHKTADEYGRLAAETAKVMKWVDPSIELVACGSSNSGMPTFIDWEAKVLEHTYEHVDYISLHTYYGNRDNNLPNYLARSMDLDHFIKSVAATCDYVKAKTRSKKTINLSLDEWNVWYHSNEADKKVEPWITARPILEDIYNFEDALLVGSLLITMLQHADRVKIACLAQLVNVIAPIMTEKGGEAWRQPIFYPYMHASVYGRGESLKPLISSPKYDCSDFTDVPYVDAAVVYSEEEETLTIFAVNKAEDQMETEISLRGFESYQIAEHIVLEHQDIKATNQHNRKNVVPHSNGSSSVSENGLTAHFTPLSWNVIRLKKQS.

Alpha-L-arabinofuranose is bound by residues Glu27, Asn72, and Asn172. Glu173 functions as the Proton donor/acceptor in the catalytic mechanism. Residues Tyr244, Glu292, and Gln349 each contribute to the alpha-L-arabinofuranose site. Glu292 serves as the catalytic Nucleophile.

Belongs to the glycosyl hydrolase 51 family. Homohexamer; trimer of dimers.

The protein resides in the cytoplasm. The catalysed reaction is Hydrolysis of terminal non-reducing alpha-L-arabinofuranoside residues in alpha-L-arabinosides.. It carries out the reaction (20S)-ginsenoside Rc + H2O = L-arabinofuranose + (20S)-ginsenoside Rd. Its pathway is glycan metabolism; L-arabinan degradation. With respect to regulation, at a concentration of 5 mM, K(+), Cu(2+) and Ni(2+) exhibit inhibitory effects on the activity. Additionally, the chemical reagent SDS also displays a certain degree of inhibition. Enzymatic activity is largely unaffected by product feedback inhibition. Involved in the degradation of arabinan and is a key enzyme in the complete degradation of the plant cell wall. Catalyzes the cleavage of terminal alpha-(1-&gt;5)-arabinofuranosyl bonds in different hemicellulosic homopolysaccharides (branched and debranched arabinans). It acts preferentially on arabinotriose, arabinobiose and linear alpha-(1-&gt;5)-L-arabinan, and is much less effective on branched sugar beet arabinan. When expressed in E.coli, the recombinant enyzme can hydrolyze, with relatively low catalytic efficiency, the terminal alpha-L-arabinofuranoside at the C20 position of ginsenoside Rc to produce ginsenoside Rd, a rare ginsenoside that exhibits diverse and powerful pharmacological activities. This is Intracellular exo-alpha-(1-&gt;5)-L-arabinofuranosidase 1 from Bacillus subtilis (strain 168).